Reading from the N-terminus, the 505-residue chain is ATP synthase subunit alpha (505 aa).

Position 169 to 176 (169 to 176 (GDRQTGKT)) interacts with ATP.

The protein belongs to the ATPase alpha/beta chains family. F-type ATPases have 2 components, CF(1) - the catalytic core - and CF(0) - the membrane proton channel. CF(1) has five subunits: alpha(3), beta(3), gamma(1), delta(1), epsilon(1). CF(0) has three main subunits: a(1), b(2) and c(9-12). The alpha and beta chains form an alternating ring which encloses part of the gamma chain. CF(1) is attached to CF(0) by a central stalk formed by the gamma and epsilon chains, while a peripheral stalk is formed by the delta and b chains.

It is found in the cell membrane. The catalysed reaction is ATP + H2O + 4 H(+)(in) = ADP + phosphate + 5 H(+)(out). Its function is as follows. Produces ATP from ADP in the presence of a proton gradient across the membrane. The alpha chain is a regulatory subunit. In Clostridium acetobutylicum (strain ATCC 824 / DSM 792 / JCM 1419 / IAM 19013 / LMG 5710 / NBRC 13948 / NRRL B-527 / VKM B-1787 / 2291 / W), this protein is ATP synthase subunit alpha.